Consider the following 166-residue polypeptide: Large ribosomal subunit protein uL10 (166 aa).

This sequence belongs to the universal ribosomal protein uL10 family. In terms of assembly, part of the ribosomal stalk of the 50S ribosomal subunit. The N-terminus interacts with L11 and the large rRNA to form the base of the stalk. The C-terminus forms an elongated spine to which L12 dimers bind in a sequential fashion forming a multimeric L10(L12)X complex.

Functionally, forms part of the ribosomal stalk, playing a central role in the interaction of the ribosome with GTP-bound translation factors. The protein is Large ribosomal subunit protein uL10 of Phytoplasma australiense.